A 145-amino-acid polypeptide reads, in one-letter code: D-aminoacyl-tRNA deacylase (145 aa).

Residues 137–138 (GP) carry the Gly-cisPro motif, important for rejection of L-amino acids motif.

It belongs to the DTD family. In terms of assembly, homodimer.

The protein localises to the cytoplasm. The enzyme catalyses glycyl-tRNA(Ala) + H2O = tRNA(Ala) + glycine + H(+). It catalyses the reaction a D-aminoacyl-tRNA + H2O = a tRNA + a D-alpha-amino acid + H(+). An aminoacyl-tRNA editing enzyme that deacylates mischarged D-aminoacyl-tRNAs. Also deacylates mischarged glycyl-tRNA(Ala), protecting cells against glycine mischarging by AlaRS. Acts via tRNA-based rather than protein-based catalysis; rejects L-amino acids rather than detecting D-amino acids in the active site. By recycling D-aminoacyl-tRNA to D-amino acids and free tRNA molecules, this enzyme counteracts the toxicity associated with the formation of D-aminoacyl-tRNA entities in vivo and helps enforce protein L-homochirality. The polypeptide is D-aminoacyl-tRNA deacylase (Brevibacillus brevis (strain 47 / JCM 6285 / NBRC 100599)).